We begin with the raw amino-acid sequence, 328 residues long: MITVGIDHGTSGITTCIKDNDKKIIFKLKRTELKEKSYLEELEKHISLEDIDLIALTYSMGDGINKILPIEKVKNRGVLSIEGAGEKVGGGTKVYDEIKESGLPAVVIPGLHRGIECLDERFRALYSHIASPEKVSIAYYAYKLFGFNDFVLSDISSNTVTLLIKDGKIFGGFDACIGAIGMLHGPIDLEMIRDIDAGKITANEAFSKAGAVKIAKLYKGVENTKEEIINNYFNDENCRLAVDSLILSVSMEINSLLPLLDKNKRRVVLAGSIGTLRNPIDIPKRIKEFVEAKIFVLYGESGAIGGALIAEDILKGKRDILGIEVEFK.

It belongs to the UPF0285 family.

This is UPF0285 protein MJ1370 from Methanocaldococcus jannaschii (strain ATCC 43067 / DSM 2661 / JAL-1 / JCM 10045 / NBRC 100440) (Methanococcus jannaschii).